We begin with the raw amino-acid sequence, 314 residues long: Olfactory receptor 1E2 (314 aa).

Residues 1 to 25 (MMGQNQTSISDFLLLGLPIQPEQQN) are Extracellular-facing. The N-linked (GlcNAc...) asparagine glycan is linked to N5. A helical membrane pass occupies residues 26–49 (LCYALFLAMYLTTLLGNLLIIVLI). At 50-57 (RLDSHLHT) the chain is on the cytoplasmic side. The chain crosses the membrane as a helical span at residues 58–79 (PMYLFLSNLSFSDLCFSSVTIP). The Extracellular portion of the chain corresponds to 80–100 (KLLQNMQNQDPSIPYADCLTQ). C97 and C189 are disulfide-bonded. Residues 101 to 120 (MHFFLLFGDLESFLLVAMAY) traverse the membrane as a helical segment. The Cytoplasmic portion of the chain corresponds to 121–139 (DRYVAICFPLHYTAIMSPM). The chain crosses the membrane as a helical span at residues 140–158 (LCLSVVALSWVLTTFHAML). At 159 to 196 (HTLLMARLCFCADNVIPHFFCDMSALLKLACSDTRVNE) the chain is on the extracellular side. A helical membrane pass occupies residues 197–219 (WVIFIMGGLIVVIPFLLILGSYA). At 220–236 (RIVSSILKVPSFKGICK) the chain is on the cytoplasmic side. The helical transmembrane segment at 237 to 260 (ALSTCGSHLSVVSLFYGTVIGLYL) threads the bilayer. Over 261–272 (CPSANSSTLKDT) the chain is Extracellular. Residue N265 is glycosylated (N-linked (GlcNAc...) asparagine). Residues 273–292 (VMAMMYTVVTPMLNPFIYSL) form a helical membrane-spanning segment. Residues 293–314 (RNRDMKGALERVICKRKNPFLL) are Cytoplasmic-facing.

It belongs to the G-protein coupled receptor 1 family.

It localises to the cell membrane. In terms of biological role, odorant receptor. In Pan troglodytes (Chimpanzee), this protein is Olfactory receptor 1E2 (OR1E2).